The following is a 213-amino-acid chain: Ribosomal RNA small subunit methyltransferase G (213 aa).

Residues glycine 75, phenylalanine 80, 128-129 (IE), and arginine 144 each bind S-adenosyl-L-methionine.

It belongs to the methyltransferase superfamily. RNA methyltransferase RsmG family.

It localises to the cytoplasm. The catalysed reaction is guanosine(527) in 16S rRNA + S-adenosyl-L-methionine = N(7)-methylguanosine(527) in 16S rRNA + S-adenosyl-L-homocysteine. Specifically methylates the N7 position of guanine in position 527 of 16S rRNA. This Brucella abortus (strain S19) protein is Ribosomal RNA small subunit methyltransferase G.